Reading from the N-terminus, the 469-residue chain is COP9 signalosome complex subunit 5 (469 aa).

The MPN domain occupies 63-200; that stretch reads TYISSLALCK…IGAFRTFPDN (138 aa). H146, H148, and D159 together coordinate Zn(2+). The JAMM motif motif lies at 146–159; it reads HSHPGYGCWLSGID. 2 disordered regions span residues 201 to 220 and 331 to 404; these read YKSP…PPSK and YDSF…KRPM. Positions 344-353 are enriched in acidic residues; sequence DEMDDESDLD.

Belongs to the peptidase M67A family. CSN5 subfamily. As to quaternary structure, component of the COP9 signalosome (CSN) complex.

It localises to the cytoplasm. The protein localises to the nucleus. Its function is as follows. Catalytic Component of the COP9 signalosome (CSN) complex that acts as an regulator of the ubiquitin (Ubl) conjugation pathway by mediating the deneddylation of the cullin subunit of SCF-type E3 ubiquitin-protein ligase complexes. The CSN complex is involved in the regulation of the mating pheromone response. The polypeptide is COP9 signalosome complex subunit 5 (RRI1) (Debaryomyces hansenii (strain ATCC 36239 / CBS 767 / BCRC 21394 / JCM 1990 / NBRC 0083 / IGC 2968) (Yeast)).